Here is a 537-residue protein sequence, read N- to C-terminus: Glucocorticoid-induced transcript 1 protein (537 aa).

2 disordered regions span residues 1–45 (MSTA…APAA) and 62–254 (LLRG…HGNH). Serine 69, serine 96, serine 98, and serine 99 each carry phosphoserine. Low complexity predominate over residues 69–86 (SPTRPAAAATAAAALGSL). The segment covering 97-106 (PSSPTPPPAA) has biased composition (pro residues). Threonine 101 bears the Phosphothreonine mark. A compositionally biased stretch (basic and acidic residues) spans 121–136 (RSPESRRRSSSPERRS). The segment covering 152 to 168 (IRTSSTIRRTSSLDTIT) has biased composition (low complexity). Residues serine 162 and serine 163 each carry the phosphoserine modification. Phosphothreonine occurs at positions 166 and 168. Residues 178–192 (RDPHVHYPSCMRDKA) show a composition bias toward basic and acidic residues. The residue at position 214 (serine 214) is a Phosphoserine. Residues 217–244 (SADQLKEIAKLRQQLQRSKQSSRHSKEK) adopt a coiled-coil conformation. Serine 248 is modified (phosphoserine). Threonine 256 carries the phosphothreonine modification. Serine 293 carries the phosphoserine modification. Over residues 309 to 321 (EVSKPLDIPDGRR) the composition is skewed to basic and acidic residues. The tract at residues 309-407 (EVSKPLDIPD…KPNNSYMFKR (99 aa)) is disordered. Over residues 329 to 346 (RSSSTRSIDTQTPSVQER) the composition is skewed to polar residues. Threonine 333 carries the phosphothreonine modification. Serine 335 is modified (phosphoserine). Threonine 340 carries the phosphothreonine modification. Positions 347 to 359 (SSSCSSHSPCVSP) are enriched in low complexity. Residues serine 384, serine 388, serine 396, serine 402, and serine 470 each carry the phosphoserine modification. A disordered region spans residues 495–520 (SLSDDTSTADSLEPSAQQPSQQQQLL).

In terms of tissue distribution, predominantly expressed in thymus and testis, especially in CD4+CD8+ cells and at specific stages of spermatogenesis.

The protein is Glucocorticoid-induced transcript 1 protein (Glcci1) of Mus musculus (Mouse).